The chain runs to 1693 residues: MFKWVTPASTATLSRCTLPATTAATTTTTAMAATRTATTTTRTTRPQLLSIALTSLIIIVASFVPTTSGFRSIETNGGGRKLFGGYRITPKHCRATKTLPSSDPRANGPTICMFNHECAQRGGEVVGACMDGFLFGACCQIPPTHELASTLINEAQNAYFQQHQQQTKLQQSAAQSSFESYGEQQQSLSEEQVAQQPSQNIYDQQNLDKVYQQLDSSSSISPPNGAYGDEPQQQEYQSESEQPVRDENAYPTSSSSTEATQSQSSSASVEFEQEPSQPADASNDQTTQKINKQPVQPPNFHVHKHSVTINSPSSPPQNDDFVMQVLSTLPPEHADDHHIVFTTEVPTKITSGLQDQTSSESNSFEEVSSTPAATQKPKPKPTQMPTQKTTQKATQKPTPKPTQKAKPKPVPQLAESMKRPIQQKPQQVAKPKPSPKPAQSTNNHHHNHLILDGGEFTHSDITHPGADADLVEDLQFSTGYGPQPVYAEPPKQQQQQQPAEQSYISSSTSAKRPTTGHNSPTTVSSITTHVDSIESIILQLNNTSHGPSYNVVSQQTPSYGYPGAAVVQTEPAAQNPTFYQENESEKVQESDSQSDYGYTTTVNYESFYDKVSDEQDASAAVSQSAEMPTARPGYGEDVSAVLEDHTMPANGYHDAEAPVAPQTSEFNKMPVMGIAYPVDMSYMEEEGNLPATAAGYGQMSSDSYEASTESTYQKLSTVQTEEPQPTYVRPTTNANKQNRPVASYIGMVTMQHYNPQPGNGDYQAQVPPEVSVSSHTTKVQEQMDETSNGYQQSETTSGYVSPPTAVPAPAQRPQYDAVQGDASSERPVLVTASPRPRPKPSTKRPAVKRPISGESTKKKPQPQPSAGAYNQEKISEHSTRKPVSNGYDKVPESPITHIQIKKPSATQHKEQEQTGYPRPASPAGYEQTTAAAPAPAAPSLNYDKPDAPPSQYDQPSAPSASYDQLAPMPSLNYNEQHASSPGRKPSTAKPISTSYVTGPSTPRPPATVDYHYDNVPPLFMADDKLDAFIQSTAENIVGSTPGNYQPPLVATASTPAYAHRPTSSGSYGHKKPGFVQINGTPKPPRPTVLITPKPTAINLVTYSSLSDDSNKLASSTSSYVTGRPGVQGVSSNDFKDPGYFGSSPVHVAFTQSTTEAVYAVPSDDKPAFPGYFGPTPSYPAFSVPGEKVGQNVMEETYTSPNDFVNFPPVRNPNLNMSAASSAVTSDLDLSTPAFVEDVVLKDKMHTLVHKLVASLQGNFEALADMIEEPGSNKTVATYQAGAGGTAKPVRVVTTRKPVRTATTTRPKVTTKKPVTRVTTKAPNKKTSAVSTTTRKPATRRTTVAAKVTTTTRRPATKKPTRRVSSTVKTTTVSSARPADDEIVDEEDEEDVNPNPSDNEIDQGATLSSYGGANGRKIHSTSRTLPTPNLAFHSPSTECGVRPHVKSGRIVGGKGSTFGAYPWQVLVRESTWLGLFTKNKCGGVLITSRYVITAAHCQPGFLASLVAVMGEFDISGDLESKRSVTKNVKRVIVHRQYDPATFENDLALLELDSPVQFDTHIVPICMPNDVADFTGRMATVTGWGRLKYGGGVPSVLQEVQVPIIENSVCQEMFHTAGHNKKILTSFLCAGYANGQKDSCEGDSGGPLVLQRPDGRYELAGTVSHGIKCAAPYLPGVYMRTTFYKPWLRSITGVK.

The Cytoplasmic segment spans residues methionine 1 to glutamine 47. The helical; Signal-anchor for type II membrane protein transmembrane segment at leucine 48 to serine 68 threads the bilayer. Topologically, residues glycine 69–lysine 1693 are extracellular. Disordered regions lie at residues glutamine 170–serine 198, glutamine 212–phenylalanine 321, glycine 352–glycine 465, and serine 477–serine 524. 2 stretches are compositionally biased toward polar residues: residues phenylalanine 178 to serine 198 and glutamine 212 to proline 222. 2 stretches are compositionally biased toward low complexity: residues glutamate 230–glutamate 241 and threonine 252–serine 268. The span at glutamate 274–proline 294 shows a compositional bias: polar residues. Composition is skewed to low complexity over residues serine 358–lysine 404, glutamine 422–proline 431, and glutamate 488–glutamine 501. Residues serine 502–serine 524 are compositionally biased toward polar residues. N-linked (GlcNAc...) asparagine glycans are attached at residues asparagine 541 and asparagine 582. Disordered regions lie at residues glutamine 615–glycine 635, histidine 752–threonine 1007, and tyrosine 1057–isoleucine 1090. Residues serine 771 to tyrosine 799 are compositionally biased toward polar residues. The span at proline 836–valine 847 shows a compositional bias: basic residues. Polar residues-rich tracts occupy residues glutamine 951–tyrosine 962 and lysine 989–serine 1000. N-linked (GlcNAc...) asparagine glycans are attached at residues asparagine 1215 and asparagine 1272. Composition is skewed to low complexity over residues proline 1297–lysine 1307, threonine 1331–arginine 1353, and arginine 1362–arginine 1376. Residues proline 1297–serine 1435 are disordered. Over residues aspartate 1380–valine 1391 the composition is skewed to acidic residues. The Peptidase S1 domain maps to isoleucine 1449–glycine 1691. Cysteine 1480 and cysteine 1496 are oxidised to a cystine. Active-site charge relay system residues include histidine 1495 and aspartate 1544. Intrachain disulfides connect cysteine 1608/cysteine 1627 and cysteine 1638/cysteine 1667. The active-site Charge relay system is serine 1642.

It belongs to the peptidase S1 family.

It localises to the cell membrane. Its function is as follows. Probable endopeptidase. In tracheal terminal cells, acts downstream of ich to regulate seamless tube growth and/or maintenance probably by processing lumenal matrix proteins. The sequence is that of Serine protease filzig from Drosophila melanogaster (Fruit fly).